A 224-amino-acid chain; its full sequence is Orotate phosphoribosyltransferase (224 aa).

5-phospho-alpha-D-ribose 1-diphosphate-binding positions include Lys26, 73–74 (YK), Arg100, Lys101, Lys104, His106, and 127–135 (EDVTTAGTS). 2 residues coordinate orotate: Thr131 and Arg160.

This sequence belongs to the purine/pyrimidine phosphoribosyltransferase family. PyrE subfamily. In terms of assembly, homodimer. Requires Mg(2+) as cofactor.

The catalysed reaction is orotidine 5'-phosphate + diphosphate = orotate + 5-phospho-alpha-D-ribose 1-diphosphate. Its pathway is pyrimidine metabolism; UMP biosynthesis via de novo pathway; UMP from orotate: step 1/2. Functionally, catalyzes the transfer of a ribosyl phosphate group from 5-phosphoribose 1-diphosphate to orotate, leading to the formation of orotidine monophosphate (OMP). The chain is Orotate phosphoribosyltransferase from Clostridium acetobutylicum (strain ATCC 824 / DSM 792 / JCM 1419 / IAM 19013 / LMG 5710 / NBRC 13948 / NRRL B-527 / VKM B-1787 / 2291 / W).